The sequence spans 677 residues: Methionine--tRNA ligase (677 aa).

The short motif at 15–25 (PYANGSIHLGH) is the 'HIGH' region element. Cys146, Cys149, Cys159, and Cys162 together coordinate Zn(2+). Positions 333–337 (KMSKS) match the 'KMSKS' region motif. Residue Lys336 coordinates ATP. Residues 575 to 677 (DFAKVDLRVA…DGAKPGQQVK (103 aa)) form the tRNA-binding domain.

Belongs to the class-I aminoacyl-tRNA synthetase family. MetG type 1 subfamily. As to quaternary structure, homodimer. Requires Zn(2+) as cofactor.

Its subcellular location is the cytoplasm. It carries out the reaction tRNA(Met) + L-methionine + ATP = L-methionyl-tRNA(Met) + AMP + diphosphate. Is required not only for elongation of protein synthesis but also for the initiation of all mRNA translation through initiator tRNA(fMet) aminoacylation. The protein is Methionine--tRNA ligase of Klebsiella pneumoniae (strain 342).